The chain runs to 358 residues: UDP-N-acetylglucosamine--N-acetylmuramyl-(pentapeptide) pyrophosphoryl-undecaprenol N-acetylglucosamine transferase (358 aa).

UDP-N-acetyl-alpha-D-glucosamine-binding positions include 11–13 (TGG), N120, R161, S188, and Q282.

This sequence belongs to the glycosyltransferase 28 family. MurG subfamily.

The protein localises to the cell inner membrane. It carries out the reaction di-trans,octa-cis-undecaprenyl diphospho-N-acetyl-alpha-D-muramoyl-L-alanyl-D-glutamyl-meso-2,6-diaminopimeloyl-D-alanyl-D-alanine + UDP-N-acetyl-alpha-D-glucosamine = di-trans,octa-cis-undecaprenyl diphospho-[N-acetyl-alpha-D-glucosaminyl-(1-&gt;4)]-N-acetyl-alpha-D-muramoyl-L-alanyl-D-glutamyl-meso-2,6-diaminopimeloyl-D-alanyl-D-alanine + UDP + H(+). It participates in cell wall biogenesis; peptidoglycan biosynthesis. Functionally, cell wall formation. Catalyzes the transfer of a GlcNAc subunit on undecaprenyl-pyrophosphoryl-MurNAc-pentapeptide (lipid intermediate I) to form undecaprenyl-pyrophosphoryl-MurNAc-(pentapeptide)GlcNAc (lipid intermediate II). This is UDP-N-acetylglucosamine--N-acetylmuramyl-(pentapeptide) pyrophosphoryl-undecaprenol N-acetylglucosamine transferase from Parasynechococcus marenigrum (strain WH8102).